A 368-amino-acid chain; its full sequence is D-amino-acid oxidase (368 aa).

Residues Ala11, Ser14, Lys35, His36, Cys46, Ser47, Gly51, Asn53, and Phe174 each contribute to the FAD site. Cys230 and Cys285 are joined by a disulfide. The (R)-lactate site is built by Tyr244, Tyr260, and Arg308. Residues Tyr244, Tyr260, and Arg308 each coordinate anthranilate. FAD-binding residues include Arg308, Gly334, Gly337, Tyr338, and Gln339. A Microbody targeting signal motif is present at residues Ala366–Leu368.

It belongs to the DAMOX/DASOX family. As to quaternary structure, homotetramer. It depends on FAD as a cofactor. The disulfide bond might contribute to the high thermal stability of the protein.

Its subcellular location is the peroxisome matrix. It carries out the reaction a D-alpha-amino acid + O2 + H2O = a 2-oxocarboxylate + H2O2 + NH4(+). It catalyses the reaction D-alanine + O2 + H2O = pyruvate + H2O2 + NH4(+). The enzyme catalyses D-glutamate + O2 + H2O = H2O2 + 2-oxoglutarate + NH4(+). The catalysed reaction is D-serine + O2 + H2O = 3-hydroxypyruvate + H2O2 + NH4(+). It carries out the reaction D-phenylalanine + O2 + H2O = 3-phenylpyruvate + H2O2 + NH4(+). It catalyses the reaction D-arginine + O2 + H2O = 5-guanidino-2-oxopentanoate + H2O2 + NH4(+). The enzyme catalyses D-methionine + O2 + H2O = 4-methylsulfanyl-2-oxobutanoate + H2O2 + NH4(+). The catalysed reaction is D-leucine + O2 + H2O = 4-methyl-2-oxopentanoate + H2O2 + NH4(+). It carries out the reaction D-lysine + O2 + H2O = 6-amino-2-oxohexanoate + H2O2 + NH4(+). It catalyses the reaction D-valine + O2 + H2O = 3-methyl-2-oxobutanoate + H2O2 + NH4(+). The enzyme catalyses D-histidine + O2 + H2O = 3-(imidazol-5-yl)pyruvate + H2O2 + NH4(+). The catalysed reaction is D-glutamine + O2 + H2O = 2-oxoglutaramate + H2O2 + NH4(+). It carries out the reaction D-isoleucine + O2 + H2O = (R)-3-methyl-2-oxopentanoate + H2O2 + NH4(+). It catalyses the reaction D-allo-isoleucine + O2 + H2O = (S)-3-methyl-2-oxopentanoate + H2O2 + NH4(+). The enzyme catalyses D-threonine + O2 + H2O = (S)-3-hydroxy-2-oxobutanoate + H2O2 + NH4(+). The catalysed reaction is D-asparagine + O2 + H2O = 2-oxosuccinamate + H2O2 + NH4(+). It carries out the reaction D-tryptophan + O2 + H2O = indole-3-pyruvate + H2O2 + NH4(+). It catalyses the reaction D-tyrosine + O2 + H2O = 3-(4-hydroxyphenyl)pyruvate + H2O2 + NH4(+). With respect to regulation, partially inhibited by benzoate, crotonate, and D-malate. Functionally, catalyzes the oxidative deamination of D-amino acids with broad substrate specificity. Enables the organism to utilize D-amino acids as a source of nutrients. Unusually, has high activity on D-glutamate. The polypeptide is D-amino-acid oxidase (Talaromyces emersonii (Thermophilic fungus)).